Consider the following 465-residue polypeptide: 3-isopropylmalate dehydratase large subunit (465 aa).

Cys-347, Cys-407, and Cys-410 together coordinate [4Fe-4S] cluster. The segment at 416–443 (DTLRPGERSASTSNRNFEGRQGPGGRTH) is disordered.

The protein belongs to the aconitase/IPM isomerase family. LeuC type 1 subfamily. In terms of assembly, heterodimer of LeuC and LeuD. [4Fe-4S] cluster is required as a cofactor.

It catalyses the reaction (2R,3S)-3-isopropylmalate = (2S)-2-isopropylmalate. It participates in amino-acid biosynthesis; L-leucine biosynthesis; L-leucine from 3-methyl-2-oxobutanoate: step 2/4. Functionally, catalyzes the isomerization between 2-isopropylmalate and 3-isopropylmalate, via the formation of 2-isopropylmaleate. The protein is 3-isopropylmalate dehydratase large subunit of Frankia casuarinae (strain DSM 45818 / CECT 9043 / HFP020203 / CcI3).